We begin with the raw amino-acid sequence, 423 residues long: MNILQNLKESDPVISNFIKSEKNRQETHLELIASENFASIAVMEAQGSVLTNKYAEGLPQKRYYGGCEFVDQIEELAIQRAKKLFNANWANVQPHSGAQANAAVFLSLLKPGDTIMGMDLSHGGHLTHGSPVNMSGKWFNAVHYGVNKETSELNFDEIREIALETKPKLIICGYSAYPRTIDFESFRNIADEVGAFLMADIAHIAGLVASKLHPNPIPYCDVVTTTTHKTLRGPRGGLILCKDAEFGKKFDKSVFPGTQGGPLEHIIAAKAVAFGEALQPDFVNYSQQVIKNAKVLASTLINRGIDIVSGGTDNHIVLLDLRSINMTGKIADLLVSEVNITANKNTVPFDPESPFVTSGLRLGTAALTTRGFNENAFAEVGEIIADRLLNPDDSLIESQCKERVLTLCNRFPLYESKLEASIK.

(6S)-5,6,7,8-tetrahydrofolate is bound by residues L120 and 124-126 (GHL). K229 carries the N6-(pyridoxal phosphate)lysine modification. Position 353-355 (353-355 (SPF)) interacts with (6S)-5,6,7,8-tetrahydrofolate.

The protein belongs to the SHMT family. In terms of assembly, homodimer. The cofactor is pyridoxal 5'-phosphate.

Its subcellular location is the cytoplasm. The enzyme catalyses (6R)-5,10-methylene-5,6,7,8-tetrahydrofolate + glycine + H2O = (6S)-5,6,7,8-tetrahydrofolate + L-serine. The protein operates within one-carbon metabolism; tetrahydrofolate interconversion. It functions in the pathway amino-acid biosynthesis; glycine biosynthesis; glycine from L-serine: step 1/1. In terms of biological role, catalyzes the reversible interconversion of serine and glycine with tetrahydrofolate (THF) serving as the one-carbon carrier. This reaction serves as the major source of one-carbon groups required for the biosynthesis of purines, thymidylate, methionine, and other important biomolecules. Also exhibits THF-independent aldolase activity toward beta-hydroxyamino acids, producing glycine and aldehydes, via a retro-aldol mechanism. The protein is Serine hydroxymethyltransferase of Prochlorococcus marinus (strain MIT 9301).